We begin with the raw amino-acid sequence, 984 residues long: Ephrin type-B receptor 1 (984 aa).

The N-terminal stretch at 1-17 (MALDCLLLFLLASAVAA) is a signal peptide. Residues 18–540 (MEETLMDTRT…YKSELREQLP (523 aa)) are Extracellular-facing. Residues 19–201 (EETLMDTRTA…FFKKCPSIVQ (183 aa)) form the Eph LBD domain. Fibronectin type-III domains follow at residues 322 to 432 (VPSG…TNQA) and 433 to 528 (APST…TLTD). 3 N-linked (GlcNAc...) asparagine glycosylation sites follow: Asn-334, Asn-426, and Asn-480. Residues 541–563 (LIAGSAAAGVVFVVSLVAISIVC) traverse the membrane as a helical segment. The Cytoplasmic portion of the chain corresponds to 564-984 (SRKRAYSKEA…QMNQSPSVMA (421 aa)). Tyr-600 carries the post-translational modification Phosphotyrosine. One can recognise a Protein kinase domain in the interval 619–882 (VKIEEVIGAG…EIVNTLDKMI (264 aa)). Residues 625–633 (IGAGEFGEV) and Lys-651 each bind ATP. Asp-744 serves as the catalytic Proton acceptor. An SAM domain is found at 911 to 975 (TAFTTVDDWL…LSSIHSMRVQ (65 aa)). Tyr-928 is modified (phosphotyrosine; by autocatalysis). Positions 982 to 984 (VMA) match the PDZ-binding motif.

The protein belongs to the protein kinase superfamily. Tyr protein kinase family. Ephrin receptor subfamily. As to quaternary structure, heterotetramer upon binding of the ligand. The heterotetramer is composed of an ephrin dimer and a receptor dimer. Oligomerization is probably required to induce biological responses. Interacts with EPHB6; transphosphorylates EPHB6 to form an active signaling complex. Interacts with PICK1. Interacts (through Tyr-594) with NCK1 (via SH2 domain); activates the JUN cascade to regulate cell adhesion. The ligand-activated form interacts (through Tyr-928) with GRB7 and GRB10 (via SH2 domains). The ligand-activated form interacts (residues within the catalytic domain) with GRB2 (via SH2 domain). Interacts with GRB2, SHC1 and SRC; activates the MAPK/ERK cascade to regulate cell migration. Interacts with CBL; regulates receptor degradation through ubiquitination. Interacts with ACP1. Phosphorylated. Autophosphorylation is stimulated by the ligand EFNB1. Required for interaction with SH2 domain-containing interactors, for activation of the MAPK/ERK and JUN signaling cascades and for ubiquitination by CBL. Post-translationally, ubiquitinated; (EFNB1)ligand-induced poly- and/or multi-ubiquitination by CBL is regulated by SRC and leads to lysosomal degradation. In terms of tissue distribution, restricted to brain and testes.

The protein resides in the cell membrane. The protein localises to the early endosome membrane. It is found in the cell projection. It localises to the dendrite. It carries out the reaction L-tyrosyl-[protein] + ATP = O-phospho-L-tyrosyl-[protein] + ADP + H(+). Receptor tyrosine kinase which binds promiscuously transmembrane ephrin-B family ligands residing on adjacent cells, leading to contact-dependent bidirectional signaling into neighboring cells. The signaling pathway downstream of the receptor is referred to as forward signaling while the signaling pathway downstream of the ephrin ligand is referred to as reverse signaling. Cognate/functional ephrin ligands for this receptor include EFNB1, EFNB2 and EFNB3. During nervous system development, regulates retinal axon guidance redirecting ipsilaterally ventrotemporal retinal ganglion cells axons at the optic chiasm midline. This probably requires repulsive interaction with EFNB2. In the adult nervous system together with EFNB3, regulates chemotaxis, proliferation and polarity of the hippocampus neural progenitors. In addition to its role in axon guidance also plays an important redundant role with other ephrin-B receptors in development and maturation of dendritic spines and synapse formation. May also regulate angiogenesis. More generally, may play a role in targeted cell migration and adhesion. Upon activation by EFNB1 and probably other ephrin-B ligands activates the MAPK/ERK and the JNK signaling cascades to regulate cell migration and adhesion respectively. Involved in the maintenance of the pool of satellite cells (muscle stem cells) by promoting their self-renewal and reducing their activation and differentiation. This is Ephrin type-B receptor 1 (Ephb1) from Rattus norvegicus (Rat).